The primary structure comprises 969 residues: Activity-dependent neuroprotective protein a (969 aa).

The C2H2-type 1 zinc-finger motif lies at F74–H97. The segment at L107–H129 adopts a C2H2-type 2; atypical zinc-finger fold. 2 consecutive C2H2-type zinc fingers follow at residues Y169–H192 and I221–H244. The C2H2-type 5; atypical zinc-finger motif lies at K401–H423. The C2H2-type 6; atypical zinc finger occupies S443–H464. Residues L466 to H489 form a C2H2-type 7 zinc finger. The C2H2-type 8; atypical zinc finger occupies T583–H608. The C2H2-type 9; atypical zinc finger occupies Y623–H647. Residues K659 to K689 form a disordered region. The homeobox DNA-binding region spans A732–F774. The tract at residues D911–S949 is disordered. A compositionally biased stretch (polar residues) spans S929–S946.

Interacts with catenin beta-1/ctnnb1.

It localises to the nucleus. Functionally, may be involved in transcriptional regulation. Positively modulates wnt-beta-catenin/ctnnb1 signaling. Required for embryonic neurogenesis. Required for progression through late erythroid differentiation. The protein is Activity-dependent neuroprotective protein a of Danio rerio (Zebrafish).